A 423-amino-acid chain; its full sequence is Gamma-glutamyl phosphate reductase 2 (423 aa).

It belongs to the gamma-glutamyl phosphate reductase family.

The protein localises to the cytoplasm. It catalyses the reaction L-glutamate 5-semialdehyde + phosphate + NADP(+) = L-glutamyl 5-phosphate + NADPH + H(+). The protein operates within amino-acid biosynthesis; L-proline biosynthesis; L-glutamate 5-semialdehyde from L-glutamate: step 2/2. Functionally, catalyzes the NADPH-dependent reduction of L-glutamate 5-phosphate into L-glutamate 5-semialdehyde and phosphate. The product spontaneously undergoes cyclization to form 1-pyrroline-5-carboxylate. This Bacillus licheniformis (strain ATCC 14580 / DSM 13 / JCM 2505 / CCUG 7422 / NBRC 12200 / NCIMB 9375 / NCTC 10341 / NRRL NRS-1264 / Gibson 46) protein is Gamma-glutamyl phosphate reductase 2.